Consider the following 357-residue polypeptide: DNA integrity scanning protein DisA (357 aa).

One can recognise a DAC domain in the interval 8–146; sequence VKSMINILQL…GNLRYTLKDI (139 aa). ATP-binding positions include Gly75, Leu93, and 106-110; that span reads MRHRT.

It belongs to the DisA family. Homooctamer. Mg(2+) is required as a cofactor.

The catalysed reaction is 2 ATP = 3',3'-c-di-AMP + 2 diphosphate. Its function is as follows. Participates in a DNA-damage check-point that is active prior to asymmetric division when DNA is damaged. DisA forms globular foci that rapidly scan along the chromosomes during sporulation, searching for lesions. When a lesion is present, DisA pauses at the lesion site. This triggers a cellular response that culminates in a temporary block in sporulation initiation. Functionally, also has diadenylate cyclase activity, catalyzing the condensation of 2 ATP molecules into cyclic di-AMP (c-di-AMP). c-di-AMP acts as a signaling molecule that couples DNA integrity with progression of sporulation. The rise in c-di-AMP level generated by DisA while scanning the chromosome, operates as a positive signal that advances sporulation; upon encountering a lesion, the DisA focus arrests at the damaged site and halts c-di-AMP synthesis. The protein is DNA integrity scanning protein DisA of Bacillus anthracis (strain CDC 684 / NRRL 3495).